A 244-amino-acid chain; its full sequence is Ribonuclease PH (244 aa).

Residues Arg90 and 128-130 (GTR) each bind phosphate.

It belongs to the RNase PH family. Homohexameric ring arranged as a trimer of dimers.

The enzyme catalyses tRNA(n+1) + phosphate = tRNA(n) + a ribonucleoside 5'-diphosphate. In terms of biological role, phosphorolytic 3'-5' exoribonuclease that plays an important role in tRNA 3'-end maturation. Removes nucleotide residues following the 3'-CCA terminus of tRNAs; can also add nucleotides to the ends of RNA molecules by using nucleoside diphosphates as substrates, but this may not be physiologically important. Probably plays a role in initiation of 16S rRNA degradation (leading to ribosome degradation) during starvation. In Cutibacterium acnes (strain DSM 16379 / KPA171202) (Propionibacterium acnes), this protein is Ribonuclease PH.